The primary structure comprises 198 residues: FMN-dependent NADH:quinone oxidoreductase (198 aa).

Residue Met92–Leu95 coordinates FMN.

It belongs to the azoreductase type 1 family. Homodimer. It depends on FMN as a cofactor.

The catalysed reaction is 2 a quinone + NADH + H(+) = 2 a 1,4-benzosemiquinone + NAD(+). The enzyme catalyses N,N-dimethyl-1,4-phenylenediamine + anthranilate + 2 NAD(+) = 2-(4-dimethylaminophenyl)diazenylbenzoate + 2 NADH + 2 H(+). Quinone reductase that provides resistance to thiol-specific stress caused by electrophilic quinones. Its function is as follows. Also exhibits azoreductase activity. Catalyzes the reductive cleavage of the azo bond in aromatic azo compounds to the corresponding amines. The sequence is that of FMN-dependent NADH:quinone oxidoreductase from Clostridium beijerinckii (strain ATCC 51743 / NCIMB 8052) (Clostridium acetobutylicum).